The chain runs to 320 residues: N-acetylneuraminate lyase (320 aa).

2 residues coordinate aceneuramate: Thr-51 and Thr-52. Tyr-143 serves as the catalytic Proton donor. Lys-173 serves as the catalytic Schiff-base intermediate with substrate. Positions 175, 199, 201, 202, and 218 each coordinate aceneuramate.

This sequence belongs to the DapA family. NanA subfamily. Homotetramer.

It localises to the cytoplasm. It catalyses the reaction aceneuramate = aldehydo-N-acetyl-D-mannosamine + pyruvate. The protein operates within amino-sugar metabolism; N-acetylneuraminate degradation. In terms of biological role, catalyzes the cleavage of N-acetylneuraminic acid (sialic acid) to form pyruvate and N-acetylmannosamine via a Schiff base intermediate. It prevents sialic acids from being recycled and returning to the cell surface. Involved in the N-glycolylneuraminic acid (Neu5Gc) degradation pathway. The sequence is that of N-acetylneuraminate lyase from Pongo abelii (Sumatran orangutan).